Reading from the N-terminus, the 1020-residue chain is Tetrathionate reductase subunit A (1020 aa).

The segment at residues 1 to 33 (MANLTRRQWLKVGLAVGGMVTFGLSYRDVAKRA) is a signal peptide (tat-type signal). The 84-residue stretch at 71-154 (QTIAMTQCFG…TLLESLYSPL (84 aa)) folds into the 4Fe-4S Mo/W bis-MGD-type domain. [4Fe-4S] cluster-binding residues include cysteine 78, cysteine 81, cysteine 85, and cysteine 140.

It belongs to the prokaryotic molybdopterin-containing oxidoreductase family. In terms of assembly, probably composed of three subunits: TtrA, TtrB and TtrC. [4Fe-4S] cluster is required as a cofactor. It depends on Mo-bis(molybdopterin guanine dinucleotide) as a cofactor. Predicted to be exported by the Tat system. The position of the signal peptide cleavage has not been experimentally proven.

It is found in the periplasm. Its subcellular location is the cell inner membrane. Part of a membrane-bound tetrathionate reductase that catalyzes the reduction of tetrathionate to thiosulfate. TtrA is the catalytic subunit. During mice infection, the ability to use tetrathionate as an electron acceptor is a growth advantage for S.typhimurium over the competing microbiota in the lumen of the inflamed gut. The protein is Tetrathionate reductase subunit A (ttrA) of Salmonella typhimurium (strain LT2 / SGSC1412 / ATCC 700720).